A 495-amino-acid polypeptide reads, in one-letter code: Non-structural protein 1 (495 aa).

Positions 1 to 81 (MATFKDACFH…CFLDNEPHLL (81 aa)) are RNA-binding. The segment at 42–79 (CLECCQIADLTHCYGCSLPHVCKWCVQNRRCFLDNEPH) is zinc-binding domain. An important for cytoskeleton localization region spans residues 82–177 (KLQQLKHPIT…DIYAPYRIVN (96 aa)). Positions 320–495 (DIQYCKWCNI…LISNSEDDNE (176 aa)) are interaction with host IRF3. The pLxIS motif signature appears at 485-488 (LLIS).

The protein belongs to the rotavirus NSP1 family. Interacts (via C-terminus) with host IRF3; this interaction leads to IRF3 degradation. Interacts with host IRF7; this interaction leads to IRF7 degradation. Interacts with host CUL1 and CUL3.

It localises to the host cytoplasm. The protein localises to the host cytoskeleton. Its function is as follows. Plays a role in the inhibition of host innate immunity by inducing the degradation of key host factors required to activate interferon production such as IRF3, IRF5 or IRF7. Associates with components of cullin RING ligases (CRLs) including CUL1 or CUL3, which are essential multisubunit ubiquitination complexes, to modulate their activities. This Macaca mulatta (Rhesus macaque) protein is Non-structural protein 1.